We begin with the raw amino-acid sequence, 151 residues long: Deoxyuridine 5'-triphosphate nucleotidohydrolase (151 aa).

Substrate contacts are provided by residues 70-72 (RSG), Asn-83, 87-89 (LID), and Met-97.

Belongs to the dUTPase family. As to quaternary structure, homotrimer. The cofactor is Mg(2+).

The enzyme catalyses dUTP + H2O = dUMP + diphosphate + H(+). Its pathway is pyrimidine metabolism; dUMP biosynthesis; dUMP from dCTP (dUTP route): step 2/2. Its function is as follows. This enzyme is involved in nucleotide metabolism: it produces dUMP, the immediate precursor of thymidine nucleotides and it decreases the intracellular concentration of dUTP so that uracil cannot be incorporated into DNA. This chain is Deoxyuridine 5'-triphosphate nucleotidohydrolase, found in Escherichia coli O45:K1 (strain S88 / ExPEC).